The following is a 240-amino-acid chain: MLPFWIALQFLSSLPVSLPGMPAPREVGRSLLYYPLVGLLFGLLLWLASHLLQGTPSPLHAALLLTLWVLLSGALHLDGLADSADAWLGGFGDRERTLRIMKDPRSGPIAVVTLVLVLLLKFCALWVLVGQGIGAQLLLAPLIGRAAMLGLFLCTPYVRPGGLGQALAEHMPRRAAGWVLLVCVLFCLFLGGWSVLLALAVFAWLRHLMCRRLGGTTGDTAGALLELLELAVVLGLALGL.

5 consecutive transmembrane segments (helical) span residues 31–51 (LLYYPLVGLLFGLLLWLASHL), 62–81 (ALLLTLWVLLSGALHLDGLA), 109–129 (IAVVTLVLVLLLKFCALWVLV), 133–153 (IGAQLLLAPLIGRAAMLGLFL), and 179–199 (VLLVCVLFCLFLGGWSVLLAL).

It belongs to the CobS family. The cofactor is Mg(2+).

It is found in the cell inner membrane. The catalysed reaction is alpha-ribazole + adenosylcob(III)inamide-GDP = adenosylcob(III)alamin + GMP + H(+). The enzyme catalyses alpha-ribazole 5'-phosphate + adenosylcob(III)inamide-GDP = adenosylcob(III)alamin 5'-phosphate + GMP + H(+). It functions in the pathway cofactor biosynthesis; adenosylcobalamin biosynthesis; adenosylcobalamin from cob(II)yrinate a,c-diamide: step 7/7. Functionally, joins adenosylcobinamide-GDP and alpha-ribazole to generate adenosylcobalamin (Ado-cobalamin). Also synthesizes adenosylcobalamin 5'-phosphate from adenosylcobinamide-GDP and alpha-ribazole 5'-phosphate. In Pseudomonas putida (strain ATCC 47054 / DSM 6125 / CFBP 8728 / NCIMB 11950 / KT2440), this protein is Adenosylcobinamide-GDP ribazoletransferase.